The following is a 336-amino-acid chain: D-alanine--D-alanine ligase (336 aa).

The ATP-grasp domain maps to 124–330 (KMWFSALGIP…FTEYLSLVIK (207 aa)). 154-209 (ALENWGSIFVKAASQGSSVGCYKVDDSSKVAGVLKDAFGYAPYVIVEKTIKARELE) contacts ATP. The Mg(2+) site is built by Asp284, Glu297, and Asn299.

Belongs to the D-alanine--D-alanine ligase family. It depends on Mg(2+) as a cofactor. Mn(2+) is required as a cofactor.

The protein localises to the cytoplasm. It catalyses the reaction 2 D-alanine + ATP = D-alanyl-D-alanine + ADP + phosphate + H(+). It participates in cell wall biogenesis; peptidoglycan biosynthesis. In terms of biological role, cell wall formation. This chain is D-alanine--D-alanine ligase, found in Shewanella sp. (strain MR-7).